The sequence spans 500 residues: AMP phosphorylase (500 aa).

AMP is bound by residues glycine 166, 192 to 197 (SRAVTS), and threonine 201. Catalysis depends on aspartate 254, which acts as the Proton donor. AMP contacts are provided by serine 262 and lysine 286.

It belongs to the thymidine/pyrimidine-nucleoside phosphorylase family. Type 2 subfamily.

It carries out the reaction AMP + phosphate = alpha-D-ribose 1,5-bisphosphate + adenine. The enzyme catalyses CMP + phosphate = cytosine + alpha-D-ribose 1,5-bisphosphate. It catalyses the reaction UMP + phosphate = alpha-D-ribose 1,5-bisphosphate + uracil. Its function is as follows. Catalyzes the conversion of AMP and phosphate to adenine and ribose 1,5-bisphosphate (R15P). Exhibits phosphorylase activity toward CMP and UMP in addition to AMP. Functions in an archaeal AMP degradation pathway, together with R15P isomerase and RubisCO. The chain is AMP phosphorylase (deoA) from Natronomonas pharaonis (strain ATCC 35678 / DSM 2160 / CIP 103997 / JCM 8858 / NBRC 14720 / NCIMB 2260 / Gabara) (Halobacterium pharaonis).